The primary structure comprises 94 residues: Pyrimidine/purine nucleoside phosphorylase (94 aa).

It belongs to the nucleoside phosphorylase PpnP family.

The enzyme catalyses a purine D-ribonucleoside + phosphate = a purine nucleobase + alpha-D-ribose 1-phosphate. It catalyses the reaction adenosine + phosphate = alpha-D-ribose 1-phosphate + adenine. The catalysed reaction is cytidine + phosphate = cytosine + alpha-D-ribose 1-phosphate. It carries out the reaction guanosine + phosphate = alpha-D-ribose 1-phosphate + guanine. The enzyme catalyses inosine + phosphate = alpha-D-ribose 1-phosphate + hypoxanthine. It catalyses the reaction thymidine + phosphate = 2-deoxy-alpha-D-ribose 1-phosphate + thymine. The catalysed reaction is uridine + phosphate = alpha-D-ribose 1-phosphate + uracil. It carries out the reaction xanthosine + phosphate = alpha-D-ribose 1-phosphate + xanthine. Catalyzes the phosphorolysis of diverse nucleosides, yielding D-ribose 1-phosphate and the respective free bases. Can use uridine, adenosine, guanosine, cytidine, thymidine, inosine and xanthosine as substrates. Also catalyzes the reverse reactions. This is Pyrimidine/purine nucleoside phosphorylase from Saccharophagus degradans (strain 2-40 / ATCC 43961 / DSM 17024).